The following is a 238-amino-acid chain: Protein shisa-3 homolog (238 aa).

Positions 1–21 (MGALLAFCLLVGLLRWGPAGA) are cleaved as a signal peptide. Over 22-98 (QQPGEYCHGW…GITAQPVYVP (77 aa)) the chain is Lumenal. The chain crosses the membrane as a helical span at residues 99–119 (FLIVGSIFIAFIILGSLVAIY). Residues 120–238 (CCTCLRPKEP…GKSCPDFSSS (119 aa)) lie on the Cytoplasmic side of the membrane.

It belongs to the shisa family.

It localises to the endoplasmic reticulum membrane. Its function is as follows. Plays an essential role in the maturation of presomitic mesoderm cells by individual attenuation of both FGF and WNT signaling. In Mus musculus (Mouse), this protein is Protein shisa-3 homolog (Shisa3).